A 230-amino-acid chain; its full sequence is Large ribosomal subunit protein uL1 (230 aa).

Belongs to the universal ribosomal protein uL1 family. Part of the 50S ribosomal subunit.

Functionally, binds directly to 23S rRNA. The L1 stalk is quite mobile in the ribosome, and is involved in E site tRNA release. Protein L1 is also a translational repressor protein, it controls the translation of the L11 operon by binding to its mRNA. This chain is Large ribosomal subunit protein uL1, found in Leuconostoc citreum (strain KM20).